We begin with the raw amino-acid sequence, 200 residues long: Ribonuclease HII (200 aa).

One can recognise an RNase H type-2 domain in the interval Glu14–Asp200. Residues Asp20, Glu21, and Asp112 each coordinate a divalent metal cation.

This sequence belongs to the RNase HII family. It depends on Mn(2+) as a cofactor. Mg(2+) is required as a cofactor.

It localises to the cytoplasm. The catalysed reaction is Endonucleolytic cleavage to 5'-phosphomonoester.. In terms of biological role, endonuclease that specifically degrades the RNA of RNA-DNA hybrids. In Salinibacter ruber (strain DSM 13855 / M31), this protein is Ribonuclease HII.